Here is a 227-residue protein sequence, read N- to C-terminus: Potassium/proton antiporter CemA (227 aa).

4 helical membrane-spanning segments follow: residues 5–25 (SISL…SFTF), 112–132 (IICF…LILI), 143–163 (LSDT…IGFH), and 187–207 (IISG…KYWI).

This sequence belongs to the CemA family.

Its subcellular location is the plastid. The protein resides in the chloroplast inner membrane. The enzyme catalyses K(+)(in) + H(+)(out) = K(+)(out) + H(+)(in). Contributes to K(+)/H(+) antiport activity by supporting proton efflux to control proton extrusion and homeostasis in chloroplasts in a light-dependent manner to modulate photosynthesis. Prevents excessive induction of non-photochemical quenching (NPQ) under continuous-light conditions. Indirectly promotes efficient inorganic carbon uptake into chloroplasts. This chain is Potassium/proton antiporter CemA, found in Phaseolus vulgaris (Kidney bean).